The chain runs to 399 residues: Tryptophan synthase beta chain (399 aa).

Position 92 is an N6-(pyridoxal phosphate)lysine (lysine 92).

It belongs to the TrpB family. Tetramer of two alpha and two beta chains. Pyridoxal 5'-phosphate serves as cofactor.

The enzyme catalyses (1S,2R)-1-C-(indol-3-yl)glycerol 3-phosphate + L-serine = D-glyceraldehyde 3-phosphate + L-tryptophan + H2O. It participates in amino-acid biosynthesis; L-tryptophan biosynthesis; L-tryptophan from chorismate: step 5/5. The beta subunit is responsible for the synthesis of L-tryptophan from indole and L-serine. This chain is Tryptophan synthase beta chain, found in Exiguobacterium sibiricum (strain DSM 17290 / CCUG 55495 / CIP 109462 / JCM 13490 / 255-15).